Consider the following 350-residue polypeptide: uncharacterized protein (350 aa).

Residues 330-350 are disordered; the sequence is RHPGDLRSEPHYRPSAKLAEF. A compositionally biased stretch (basic and acidic residues) spans 331–341; the sequence is HPGDLRSEPHY.

This is an uncharacterized protein from Mycobacterium tuberculosis.